Here is a 78-residue protein sequence, read N- to C-terminus: Large ribosomal subunit protein bL28 (78 aa).

A disordered region spans residues 1–20 (MSQVCQVTGKRPVVGNNRSH).

It belongs to the bacterial ribosomal protein bL28 family.

The protein is Large ribosomal subunit protein bL28 of Idiomarina loihiensis (strain ATCC BAA-735 / DSM 15497 / L2-TR).